Consider the following 1032-residue polypeptide: Phosphoenolpyruvate carboxylase 4 (1032 aa).

The active site involves histidine 154. The tract at residues 377 to 407 is disordered; the sequence is PNLQKQNEQDFSESDWEKIDNGSRSGLTSRG. Residues 398–407 show a composition bias toward polar residues; it reads GSRSGLTSRG. Lysine 699 is a catalytic residue.

This sequence belongs to the PEPCase type 1 family. In terms of assembly, homotetramer. The cofactor is Mg(2+). In terms of tissue distribution, expressed at low levels in flowers and siliques, and detectable in roots.

It is found in the cytoplasm. It catalyses the reaction oxaloacetate + phosphate = phosphoenolpyruvate + hydrogencarbonate. Its function is as follows. Through the carboxylation of phosphoenolpyruvate (PEP) it forms oxaloacetate, a four-carbon dicarboxylic acid source for the tricarboxylic acid cycle. The chain is Phosphoenolpyruvate carboxylase 4 (PPC4) from Arabidopsis thaliana (Mouse-ear cress).